A 198-amino-acid polypeptide reads, in one-letter code: Protein GrpE (198 aa).

The protein belongs to the GrpE family. As to quaternary structure, homodimer.

It localises to the cytoplasm. Its function is as follows. Participates actively in the response to hyperosmotic and heat shock by preventing the aggregation of stress-denatured proteins, in association with DnaK and GrpE. It is the nucleotide exchange factor for DnaK and may function as a thermosensor. Unfolded proteins bind initially to DnaJ; upon interaction with the DnaJ-bound protein, DnaK hydrolyzes its bound ATP, resulting in the formation of a stable complex. GrpE releases ADP from DnaK; ATP binding to DnaK triggers the release of the substrate protein, thus completing the reaction cycle. Several rounds of ATP-dependent interactions between DnaJ, DnaK and GrpE are required for fully efficient folding. The sequence is that of Protein GrpE from Baumannia cicadellinicola subsp. Homalodisca coagulata.